A 34-amino-acid chain; its full sequence is COP9 signalosome complex subunit 5a (34 aa).

It belongs to the peptidase M67A family. CSN5 subfamily. In terms of assembly, component of the CSN complex, probably composed of CSN1, CSN2, CSN3, CSN4, CSN5 (CSN5A or CSN5B), CSN6 (CSN6A or CSN6B), CSN7 and CSN8. A divalent metal cation is required as a cofactor.

The protein localises to the cytoplasm. It is found in the nucleus. Its function is as follows. Probable protease subunit of the COP9 signalosome complex (CSN), a complex involved in various cellular and developmental processes such as photomorphogenesis and auxin and jasmonate responses. The CSN complex is an essential regulator of the ubiquitin (Ubl) conjugation pathway by mediating the deneddylation of the cullin subunits of the SCF-type E3 ligase complexes, leading to decrease the Ubl ligase activity of SCF. In the complex, it probably acts as the catalytic center that mediates the cleavage of Nedd8 from cullins. It however has no metalloprotease activity by itself and requires the other subunits of the CSN complex. The CSN complex is involved in repression of photomorphogenesis in darkness by regulating the activity of COP1-containing Ubl ligase complexes. This Brassica oleracea (Wild cabbage) protein is COP9 signalosome complex subunit 5a (CSN5A).